Consider the following 257-residue polypeptide: Acetylglutamate kinase (257 aa).

Residues 43–44 (GG), Arg65, and Asn157 contribute to the substrate site. Residues 180–185 (DVSGIL) and 208–210 (IIT) each bind ATP.

The protein belongs to the acetylglutamate kinase family. ArgB subfamily. Homodimer.

It localises to the cytoplasm. The catalysed reaction is N-acetyl-L-glutamate + ATP = N-acetyl-L-glutamyl 5-phosphate + ADP. It functions in the pathway amino-acid biosynthesis; L-arginine biosynthesis; N(2)-acetyl-L-ornithine from L-glutamate: step 2/4. Catalyzes the ATP-dependent phosphorylation of N-acetyl-L-glutamate. The protein is Acetylglutamate kinase of Salmonella paratyphi B (strain ATCC BAA-1250 / SPB7).